We begin with the raw amino-acid sequence, 210 residues long: Thiamine-phosphate synthase (210 aa).

4-amino-2-methyl-5-(diphosphooxymethyl)pyrimidine is bound by residues 39-43 and Asn-71; that span reads QLREK. Mg(2+)-binding residues include Asp-72 and Asp-91. A 4-amino-2-methyl-5-(diphosphooxymethyl)pyrimidine-binding site is contributed by Ser-110. 134–136 contributes to the 2-[(2R,5Z)-2-carboxy-4-methylthiazol-5(2H)-ylidene]ethyl phosphate binding site; the sequence is TPT. Position 137 (Lys-137) interacts with 4-amino-2-methyl-5-(diphosphooxymethyl)pyrimidine. Residue Gly-163 participates in 2-[(2R,5Z)-2-carboxy-4-methylthiazol-5(2H)-ylidene]ethyl phosphate binding.

This sequence belongs to the thiamine-phosphate synthase family. The cofactor is Mg(2+).

It catalyses the reaction 2-[(2R,5Z)-2-carboxy-4-methylthiazol-5(2H)-ylidene]ethyl phosphate + 4-amino-2-methyl-5-(diphosphooxymethyl)pyrimidine + 2 H(+) = thiamine phosphate + CO2 + diphosphate. It carries out the reaction 2-(2-carboxy-4-methylthiazol-5-yl)ethyl phosphate + 4-amino-2-methyl-5-(diphosphooxymethyl)pyrimidine + 2 H(+) = thiamine phosphate + CO2 + diphosphate. The enzyme catalyses 4-methyl-5-(2-phosphooxyethyl)-thiazole + 4-amino-2-methyl-5-(diphosphooxymethyl)pyrimidine + H(+) = thiamine phosphate + diphosphate. It functions in the pathway cofactor biosynthesis; thiamine diphosphate biosynthesis; thiamine phosphate from 4-amino-2-methyl-5-diphosphomethylpyrimidine and 4-methyl-5-(2-phosphoethyl)-thiazole: step 1/1. Condenses 4-methyl-5-(beta-hydroxyethyl)thiazole monophosphate (THZ-P) and 2-methyl-4-amino-5-hydroxymethyl pyrimidine pyrophosphate (HMP-PP) to form thiamine monophosphate (TMP). The protein is Thiamine-phosphate synthase of Campylobacter jejuni subsp. jejuni serotype O:2 (strain ATCC 700819 / NCTC 11168).